A 211-amino-acid chain; its full sequence is Transcriptional regulator GfcR (211 aa).

The protein belongs to the purine/pyrimidine phosphoribosyltransferase family. GfcR subfamily.

Its function is as follows. DNA-binding transcriptional regulator that functions as a regulator of central sugar catabolic pathways. The protein is Transcriptional regulator GfcR of Halorubrum lacusprofundi (strain ATCC 49239 / DSM 5036 / JCM 8891 / ACAM 34).